The chain runs to 96 residues: Small ribosomal subunit protein bS18 (96 aa).

Over residues 1-22 (MYKDVDSHQRDSRSDGHQDGFK) the composition is skewed to basic and acidic residues. Residues 1-25 (MYKDVDSHQRDSRSDGHQDGFKKNP) form a disordered region.

It belongs to the bacterial ribosomal protein bS18 family. In terms of assembly, part of the 30S ribosomal subunit. Forms a tight heterodimer with protein bS6.

Binds as a heterodimer with protein bS6 to the central domain of the 16S rRNA, where it helps stabilize the platform of the 30S subunit. In Borrelia hermsii (strain HS1 / DAH), this protein is Small ribosomal subunit protein bS18.